The primary structure comprises 769 residues: Serine protease HtrA-like (769 aa).

The segment covering 1-20 (MDIGKKHVIPKSQYRRKRRE) has biased composition (basic residues). Residues 1–390 (MDIGKKHVIP…ATSKLNKGRA (390 aa)) form a disordered region. Composition is skewed to basic and acidic residues over residues 21–64 (FFHN…ERFK) and 71–108 (LEQR…DVSK). Over residues 126-137 (YEQNSEATLSTK) the composition is skewed to polar residues. The span at 138–186 (STDKVESTEMRKLSSDKNKVGHEEQHVLSKPSEHDKETRIDSESSRTDS) shows a compositional bias: basic and acidic residues. Polar residues predominate over residues 247-262 (QQSQNEQTKTYTYGDS). Basic and acidic residues-rich tracts occupy residues 264–296 (QNDK…HIVD) and 310–330 (KTDD…HKQN). Positions 331 to 347 (ADSSETVGYQSQSTASH) are enriched in polar residues. The segment covering 348 to 364 (RSTEKRNISINDHDKLN) has biased composition (basic and acidic residues). The span at 365-390 (GQKTNTKTSANNNQKKATSKLNKGRA) shows a compositional bias: polar residues. The helical transmembrane segment at 410 to 430 (LVILMGIIILIVILNAIFNNV) threads the bilayer. Residues His504, Asp534, and Ser619 each act as charge relay system in the active site. The 54-residue stretch at 680–733 (IASLNSFERQAVKLPGKVKNGVVVDQVDNNGLADQSGLKKGDVITELDGKLLED) folds into the PDZ domain.

The protein belongs to the peptidase S1C family.

It is found in the cell membrane. This Staphylococcus aureus (strain USA300) protein is Serine protease HtrA-like.